A 493-amino-acid chain; its full sequence is Cytoplasmic tRNA 2-thiolation protein 2 (493 aa).

S489 bears the Phosphoserine mark.

This sequence belongs to the CTU2/NCS2 family. Interacts with NCS6 and URM1. May act by forming a heterodimer with NCS6.

Its subcellular location is the cytoplasm. It participates in tRNA modification; 5-methoxycarbonylmethyl-2-thiouridine-tRNA biosynthesis. Functionally, plays a central role in 2-thiolation of mcm(5)S(2)U at tRNA wobble positions of tRNA(Lys), tRNA(Glu) and tRNA(Gln). May act by forming a heterodimer with NCS6 that ligates sulfur from thiocarboxylated URM1 onto the uridine of tRNAs at wobble position. Prior mcm(5) tRNA modification by the elongator complex is required for 2-thiolation. May also be involved in protein urmylation and in invasive and pseudohyphal growth. Inhibits replication of Brome mosaic virus. This Saccharomyces cerevisiae (strain ATCC 204508 / S288c) (Baker's yeast) protein is Cytoplasmic tRNA 2-thiolation protein 2.